Consider the following 171-residue polypeptide: NADH-quinone oxidoreductase subunit I 1 (171 aa).

4Fe-4S ferredoxin-type domains follow at residues 41-71 (LSRD…LQAT) and 81-110 (EFFR…LTPD). Residues C51, C54, C57, C61, C90, C93, C96, and C100 each contribute to the [4Fe-4S] cluster site.

The protein belongs to the complex I 23 kDa subunit family. As to quaternary structure, NDH-1 is composed of 14 different subunits. Subunits NuoA, H, J, K, L, M, N constitute the membrane sector of the complex. [4Fe-4S] cluster serves as cofactor.

It is found in the cell inner membrane. The catalysed reaction is a quinone + NADH + 5 H(+)(in) = a quinol + NAD(+) + 4 H(+)(out). In terms of biological role, NDH-1 shuttles electrons from NADH, via FMN and iron-sulfur (Fe-S) centers, to quinones in the respiratory chain. The immediate electron acceptor for the enzyme in this species is believed to be ubiquinone. Couples the redox reaction to proton translocation (for every two electrons transferred, four hydrogen ions are translocated across the cytoplasmic membrane), and thus conserves the redox energy in a proton gradient. This Nitrosospira multiformis (strain ATCC 25196 / NCIMB 11849 / C 71) protein is NADH-quinone oxidoreductase subunit I 1.